An 867-amino-acid chain; its full sequence is MAATRYNPKETEPKWRKRWDEAQAFRAVEAPGKRKYYVLEMFPYPSGRLHMGHVRNYALGDVIARYKRAQDFSVLHPMGWDAFGLPAENAAMERGVDPKAWTYDNIARMRAELKELGLSIDWSREFATCDVEYYGQQQALFLELFERGLVYRKESVVNWDPVDQTVLANEQVVDGKGWRSGAPVEKRKLAQWFLKITQYADQLVDDLKTLDRWPEKVRVMQENWIGRSKGARLRFRFAGQPPAGHEAGVEVYTTRPDTLFGASFVGVAPDHPLAQAVAAANPEAAAFIEKCRHGAVSEAEIETAEKEGFDTGLKVKHPFDPSWELPVWIANFILMDYGTGAIFGCPAHDQRDLDFARKYGLPVKPVVLPPEEAQAEAIVQKLLNEAYTGPGRIINSGFLDGLDVEAAKAAAIARIEEQGDGQGATVYRLRDWGVSRQRAWGCPIPVVHCQACGVVPVRRSDLPLTHPADIEFGKAGNALERHPTWKHTTCPGCGGPATRETDTLDTFVDSSWYFARFANPGAEAPIDKAAADYWLPVDQYIGGVEHAVLHLLYARFITKALADVGMLSVREPFAGLFTQGMVTHETYRKQSGEWVEPKEVEVTAEGKTRRARLVGSGEPVVIGDVEKMSKSKKNTVAPEEIFDVYGVDAARLFVLSDSPPERDAQWSTSGVQGAWRFVNRVWDEFDASEEPVPGTEEAVTGVATDNLRRQHAKTVKAVTEAIEGFRFNSAIAHLYSFLNVLKAERPQGRAGALAHAHRAALRDFALLIAPFTPHLAEECWARIGGQGLVVEAPWPTYDPALTQDAVKVLPVQVNGKRRGEISAPAGAEPAEVEQLVLADPEIKARLEGLTIRKIIVVKDRIVNIVAA.

A 'HIGH' region motif is present at residues 43 to 53; it reads PYPSGRLHMGH. Positions 627–631 match the 'KMSKS' region motif; sequence KMSKS. An ATP-binding site is contributed by Lys630.

The protein belongs to the class-I aminoacyl-tRNA synthetase family.

It is found in the cytoplasm. It carries out the reaction tRNA(Leu) + L-leucine + ATP = L-leucyl-tRNA(Leu) + AMP + diphosphate. This Phenylobacterium zucineum (strain HLK1) protein is Leucine--tRNA ligase.